The chain runs to 82 residues: Teratocyte protein CftICK-IV (82 aa).

A signal peptide spans 1–21; it reads MAKILLTFIILTCLIVTITPA.

Post-translationally, contains 4 disulfide bonds. As to expression, abundantly expressed by teratocytes, which are extra-embryonic cells released by parasitoid wasps into their hosts during larval eclosion.

The protein localises to the secreted. This endoparasitoid wasp peptide has immununosuppressive and insecticidal activities. Suppress cellular immunity which is detectable as a reduction of hemocyte spread index in the host. In vivo, ingestion of this peptide moderately reduces leaf consumption of D.saccharalis, a permissive host for the lepidoptere C.flavipes. In Cotesia flavipes (Parasitic wasp), this protein is Teratocyte protein CftICK-IV.